The following is a 567-amino-acid chain: Unguisins hydrolase ungD (567 aa).

Belongs to the peptidase S12 family.

The protein operates within secondary metabolite biosynthesis. Functionally, hydrolase; part of the gene cluster that mediates the biosynthesis of the unguisins, gamma-aminobutyric acid (GABA)-containing fungal cyclic heptapeptides with the amino acid sequence cyclo-(D-Ala1-D-Val2-L-Phe3-D-Val4-D-Ala5-D-Trp6-GABA7) for unguisin A and cyclo-(D-Ala1-D-Val2-L-Leu3-D-Val4-D-Ala5-D-Trp6-GABA7) for unguisin B. Within the pathway, the hydrolase ungD catalyzes the hydrolysis between the D-tryptophan and GABA residues of unguisins A and B to produce the corresponding linear peptides. The alanine racemase ungC catalyzes the interconversion of L-alanine and D-alanine, providing the D-alanine which is accepted by the first adenylation domain of the nonribosomal peptide synthetase (NRPS) ungA. UngA is the main enzyme within the cluster which condenses the 7 residues using its respective 7 modules. The terminal condensation domain (Ct) is involved in cyclization with D-alanine and thereby releasing of unguisins A and B. In Aspergillus violaceofuscus (strain CBS 115571), this protein is Unguisins hydrolase ungD.